The following is a 64-amino-acid chain: Gallinacin-2 (64 aa).

The first 22 residues, 1-22 (MRILYLLFSLLFLALQVSPGLS), serve as a signal peptide directing secretion. Positions 23–28 (SPRRDM) are excised as a propeptide. 3 disulfide bridges follow: Cys31/Cys57, Cys36/Cys51, and Cys41/Cys58.

In terms of tissue distribution, expressed in circulating heterophil granulocytes and bone marrow (at protein level). Strong expression in the bone marrow, lung and testis. Moderate expression in the bursa and intestine. Low expression in the cloaca, gall bladder, brain, pancreas, trachea, air sacs and spleen. Expressed in the vagina, ovarian stroma and the theca layer of the ovarian follicle, but not in the granulosa layer of the ovarian follicle.

The protein localises to the secreted. It is found in the cytoplasmic granule. Potent antibacterial activity against the Gram-negative bacterium E.coli ML-35, and against the Gram-positive bacterium L.monocytogenes EGD. Lacks antifungal activity against C.albicans. This Gallus gallus (Chicken) protein is Gallinacin-2 (GAL2).